The chain runs to 255 residues: 5'-nucleotidase SurE (255 aa).

Residues aspartate 8, aspartate 9, serine 40, and asparagine 93 each contribute to the a divalent metal cation site.

This sequence belongs to the SurE nucleotidase family. A divalent metal cation serves as cofactor.

The protein resides in the cytoplasm. It catalyses the reaction a ribonucleoside 5'-phosphate + H2O = a ribonucleoside + phosphate. Its function is as follows. Nucleotidase that shows phosphatase activity on nucleoside 5'-monophosphates. This is 5'-nucleotidase SurE from Rhodopseudomonas palustris (strain BisB18).